We begin with the raw amino-acid sequence, 146 residues long: MRNEMHLQFSARSENESFARVTVAAFVAQLDPTTDELTEIKTVVSEAVTNAIIHGYNNDPNGIVSISVIIEDGVVHLTVRDEGVGIPDIEEARQPLFTTKPELERSGMGFTIMENFMDEVIVESEVNKGTTVYLKKAYCEKQTLCN.

It belongs to the anti-sigma-factor family.

It catalyses the reaction L-seryl-[protein] + ATP = O-phospho-L-seryl-[protein] + ADP + H(+). The catalysed reaction is L-threonyl-[protein] + ATP = O-phospho-L-threonyl-[protein] + ADP + H(+). In terms of biological role, binds to sigma F and blocks its ability to form an RNA polymerase holoenzyme (E-sigma F). Phosphorylates SpoIIAA on a serine residue. This phosphorylation may enable SpoIIAA to act as an anti-anti-sigma factor that counteracts SpoIIAB and thus releases sigma F from inhibition. The sequence is that of Anti-sigma F factor from Geobacillus stearothermophilus (Bacillus stearothermophilus).